The chain runs to 429 residues: Glutamate-1-semialdehyde 2,1-aminomutase 1 (429 aa).

Residue K268 is modified to N6-(pyridoxal phosphate)lysine.

Belongs to the class-III pyridoxal-phosphate-dependent aminotransferase family. HemL subfamily. In terms of assembly, homodimer. Pyridoxal 5'-phosphate is required as a cofactor.

Its subcellular location is the cytoplasm. It carries out the reaction (S)-4-amino-5-oxopentanoate = 5-aminolevulinate. It participates in porphyrin-containing compound metabolism; protoporphyrin-IX biosynthesis; 5-aminolevulinate from L-glutamyl-tRNA(Glu): step 2/2. The polypeptide is Glutamate-1-semialdehyde 2,1-aminomutase 1 (Listeria welshimeri serovar 6b (strain ATCC 35897 / DSM 20650 / CCUG 15529 / CIP 8149 / NCTC 11857 / SLCC 5334 / V8)).